A 315-amino-acid polypeptide reads, in one-letter code: Olfactory receptor 2T5 (315 aa).

Topologically, residues 1–29 (MANITRMANHTGKLDFILMGLFRRSKHPA) are extracellular. 2 N-linked (GlcNAc...) asparagine glycosylation sites follow: Asn-3 and Asn-9. Residues 30–53 (LLSVVIFVVFLKALSGNAVLILLI) traverse the membrane as a helical segment. Residues 54-61 (HCDAHLHS) are Cytoplasmic-facing. Residues 62 to 83 (PMYFFISQLSLMDMAYISVTVP) form a helical membrane-spanning segment. The Extracellular segment spans residues 84 to 104 (KMLLDQVMGVNKVSAPECGMQ). Cys-101 and Cys-193 are disulfide-bonded. Residues 105–124 (MFLYLTLAGSEFFLLATMAY) form a helical membrane-spanning segment. Topologically, residues 125–143 (DRYVAICHPLRYPVLMNHR) are cytoplasmic. A helical transmembrane segment spans residues 144–162 (VCLFLASGCWFLGSVDGFM). Residues 163-199 (LTPITMSFPFCRSWEIHHFFCEVPAVTILSCSDTSLY) are Extracellular-facing. The helical transmembrane segment at 200 to 223 (ETLMYLCCVLMLLIPVTIISSSYL) threads the bilayer. Residues 224–240 (LILLTVHRMNSAEGRKK) lie on the Cytoplasmic side of the membrane. The helical transmembrane segment at 241–263 (AFATCSSHLTVVILFYGAAVYTY) threads the bilayer. Residues 264 to 276 (MLPSSYHTPEKDM) are Extracellular-facing. Residues 277 to 296 (MVSVFYTILTPVLNPLIYSL) traverse the membrane as a helical segment. The Cytoplasmic portion of the chain corresponds to 297–315 (RNKDVMGALKKMLTVRFVL).

Belongs to the G-protein coupled receptor 1 family.

The protein resides in the cell membrane. Its function is as follows. Odorant receptor. This chain is Olfactory receptor 2T5 (OR2T5), found in Homo sapiens (Human).